The primary structure comprises 88 residues: Large ribosomal subunit protein bL27 (88 aa).

Belongs to the bacterial ribosomal protein bL27 family.

The chain is Large ribosomal subunit protein bL27 from Parabacteroides distasonis (strain ATCC 8503 / DSM 20701 / CIP 104284 / JCM 5825 / NCTC 11152).